The chain runs to 195 residues: Putative C-P lyase subunit protein HtxG (195 aa).

This sequence belongs to the PhnH family.

In terms of biological role, belongs to an operon involved in hypophosphite oxidation. Exact function not known. The polypeptide is Putative C-P lyase subunit protein HtxG (htxG) (Stutzerimonas stutzeri (Pseudomonas stutzeri)).